The chain runs to 555 residues: Exodeoxyribonuclease 7 large subunit (555 aa).

This sequence belongs to the XseA family. Heterooligomer composed of large and small subunits.

It localises to the cytoplasm. It carries out the reaction Exonucleolytic cleavage in either 5'- to 3'- or 3'- to 5'-direction to yield nucleoside 5'-phosphates.. Bidirectionally degrades single-stranded DNA into large acid-insoluble oligonucleotides, which are then degraded further into small acid-soluble oligonucleotides. The polypeptide is Exodeoxyribonuclease 7 large subunit (Chlamydia felis (strain Fe/C-56) (Chlamydophila felis)).